Consider the following 151-residue polypeptide: Large ribosomal subunit protein bL9 (151 aa).

It belongs to the bacterial ribosomal protein bL9 family.

Its function is as follows. Binds to the 23S rRNA. The polypeptide is Large ribosomal subunit protein bL9 (Francisella tularensis subsp. tularensis (strain FSC 198)).